A 342-amino-acid polypeptide reads, in one-letter code: Inositol 2-dehydrogenase 2 (342 aa).

It belongs to the Gfo/Idh/MocA family. Homotetramer.

The enzyme catalyses myo-inositol + NAD(+) = scyllo-inosose + NADH + H(+). In terms of biological role, involved in the oxidation of myo-inositol (MI) to 2-keto-myo-inositol (2KMI or 2-inosose). This Mycolicibacterium vanbaalenii (strain DSM 7251 / JCM 13017 / BCRC 16820 / KCTC 9966 / NRRL B-24157 / PYR-1) (Mycobacterium vanbaalenii) protein is Inositol 2-dehydrogenase 2.